A 217-amino-acid chain; its full sequence is MATGSRTSLLLAFGLLCLPWLQEGSAFPTIPLSRLFDNAMLRAHRLHQLAFDTYQEFEEAYIPKEQKYSFLQNPQTSLCFSESIPTPSNREETQQKSNLELLRISLLLIQSWLEPVQFLRSVFANSLVYGASDSNVYDLLKDLEEGIQTLMGRLEDGSPRTGQIFKQTYSKFDTNSHNDDALLKNYGLLYCFRKDMDKVETFLRIVQCRSVEGSCGF.

A signal peptide spans 1 to 26; the sequence is MATGSRTSLLLAFGLLCLPWLQEGSA. Zn(2+) is bound at residue His-44. Cys-79 and Cys-191 form a disulfide bridge. Ser-132 bears the Phosphoserine mark. At Gln-163 the chain carries Deamidated glutamine; by deterioration. Ser-176 is subject to Phosphoserine. Asn-178 is modified (deamidated asparagine; by deterioration). Glu-200 serves as a coordination point for Zn(2+). Cys-208 and Cys-215 are disulfide-bonded.

It belongs to the somatotropin/prolactin family. Monomer, dimer, trimer, tetramer and pentamer, disulfide-linked or non-covalently associated, in homomeric and heteromeric combinations. Can also form a complex either with GHBP or with the alpha2-macroglobulin complex.

The protein localises to the secreted. Its function is as follows. Plays an important role in growth control. Its major role in stimulating body growth is to stimulate the liver and other tissues to secrete IGF1. It stimulates both the differentiation and proliferation of myoblasts. It also stimulates amino acid uptake and protein synthesis in muscle and other tissues. The sequence is that of Somatotropin (GH1) from Homo sapiens (Human).